Reading from the N-terminus, the 179-residue chain is Replication restart protein DnaT (179 aa).

The segment covering 151-168 has biased composition (polar residues); it reads SRSSNGGMPQRDINSVSE. Residues 151–179 are disordered; the sequence is SRSSNGGMPQRDINSVSEPDNHIPPGFRG.

It belongs to the DnaT family. Homooligomerizes. Interacts with PriB. Component of the replication restart primosome. Primosome assembly occurs via a 'hand-off' mechanism. PriA binds to replication forks, subsequently PriB then DnaT bind; DnaT then displaces ssDNA to generate the helicase loading substrate.

In terms of biological role, involved in the restart of stalled replication forks, which reloads the replicative helicase on sites other than the origin of replication. Can function in multiple replication restart pathways. Displaces ssDNA from a PriB-ssDNA complex. Probably forms a spiral filament on ssDNA. The chain is Replication restart protein DnaT from Salmonella schwarzengrund (strain CVM19633).